The primary structure comprises 451 residues: MNKMKNFKRRLSLSVPRPETIEESLAEFTEQFNQLHTQTNEDGTDEPEQLSPGMQYQQRQNQRRFSMEDLNKRLSLPMDIRLPQEFLQKLQLENPGLPKPLTRMSRRASLSDIGFGKLETYVKLDKLGEGTYATVFKGRSKLTENLVALKEIRLEHEEGAPCTAIREVSLLKDLKHANIVTLHDLIHTDRSLTLVFEYLDSDLKQYLDHCGNLMNMHNVKIFMFQLLRGLAYCHHRKILHRDLKPQNLLINERGELKLADFGLARAKSVPTKTYSNEVVTLWYRPPDVLLGSTEYSTPIDMWGVGCILYEMATGKPLFPGSTVKEELHLIFRLLGTPTEESWPGVTSISEFRAYNFPRYLPQPLLSHAPRLDTEGINLLSSLLLYESKSRMSAEAALNHPYFQSLGDRVHQLHDTASIFSLKEIQLQKDPGYRGLAFQHPGRGKSRRQSIF.

S12, S51, S66, S75, and S109 each carry phosphoserine. Residues 121–402 (YVKLDKLGEG…AEAALNHPYF (282 aa)) form the Protein kinase domain. ATP contacts are provided by residues 127-135 (LGEGTYATV) and K150. The active-site Proton acceptor is D242. Residues S417 and S420 each carry the phosphoserine modification.

It belongs to the protein kinase superfamily. CMGC Ser/Thr protein kinase family. CDC2/CDKX subfamily. As to expression, in brain, kidney, intestine and at a much lower level, in fetal tissues.

It catalyses the reaction L-seryl-[protein] + ATP = O-phospho-L-seryl-[protein] + ADP + H(+). The enzyme catalyses L-threonyl-[protein] + ATP = O-phospho-L-threonyl-[protein] + ADP + H(+). In terms of biological role, may play a role in signal transduction cascades in terminally differentiated cells. This is Cyclin-dependent kinase 18 (Cdk18) from Mus musculus (Mouse).